The chain runs to 248 residues: Cyclo(L-leucyl-L-leucyl) synthase (248 aa).

S37 functions as the Nucleophile in the catalytic mechanism. Substrate is bound by residues N40, 180–184 (YVIAE), Y204, and 209–210 (KL).

The protein belongs to the CDPS family. As to quaternary structure, monomer.

The catalysed reaction is 2 L-leucyl-tRNA(Leu) = cyclo(L-leucyl-L-leucyl) + 2 tRNA(Leu) + 2 H(+). Involved in the biosynthesis of pulcherrimin, a red extracellular pigment. It uses activated amino acids in the form of aminoacyl-tRNAs (aa-tRNAs) as substrates to catalyze the ATP-independent formation of cyclodipeptides which are intermediates in diketopiperazine (DKP) biosynthetic pathways. Catalyzes the formation of cyclo(L-Leu-L-Leu) (cLL) from L-leucyl-tRNA(Leu). Can also incorporate various nonpolar residues, such as L-phenylalanine, L-leucine and methionine, into cyclodipeptides. The chain is Cyclo(L-leucyl-L-leucyl) synthase (yvmC) from Bacillus subtilis (strain 168).